Consider the following 175-residue polypeptide: Replication restart protein PriC (175 aa).

It belongs to the PriC family. In terms of assembly, monomer. Oligomerizes in the absence of DNA. Component of the replication restart primosome, which is composed of PriA, PriB, PriC, DnaB and DnaT; DnaG primase associates transiently with this complex. Interacts with the C-terminus of SSB; this interaction is required for DnaB loading onto substrate replication forks. Interacts with DnaB alone and in the DnaB-DnaC complex, probably 1:1 binding with DnaB.

Its function is as follows. Involved in the restart of stalled replication forks, which reloads the replicative helicase (DnaB) on sites other than the origin of replication. Recognizes abandoned replication forks and remodels DNA single-stranded binding protein (SSB) on ssDNA to uncover a loading site for DnaB. There are several restart pathways, the PriA-PriC pathway is a minor restart pathway. Also part of the minor PriC-Rep pathway for restart of stalled replication forks, which has a different substrate specificity than PriA. priB and priC have redundant roles in the cell. Stimulates the 3'-5' helicase activity of Rep helicase in vitro. In vitro can load the DnaB replicative helicase from a DnaB-DnaC complex on an SSB-coated stalled replication fork with no leading- or lagging-strand (or with a gap between the leading strand and fork junction) in the absence of other primosome proteins (PriA, PriB or DnaT). Also part of the major restart pathway with PriA, PriB, DnaB, DnaT and DnaG primase. PriC may contribute to the stability of the preprimosome complex. Preferentially binds approximately 7-9 nucleotides of single-stranded (ss)DNA, also binds double-stranded (ds)DNA. PriB is probably more important in the cell than PriC. This is Replication restart protein PriC from Escherichia coli (strain K12).